The chain runs to 217 residues: MNQTLLSSFGTPFERVELALDALREGRGVMVLDDEDRENEGDMIFPAETMTVEQMALTIRHGSGIVCLCITEDRRKQLDLPMMVQNNTSAYGTGFTVTIEAAEGVTTGVSAADRVTTVRAAIADGAKPSDLNRPGHVFPLRAQAGGVLTRGGHTEATIDLMTLAGFKPAGVLCELTNDNGTMARAPECIAFAGQHNMAVVTIEDLVAYRLAHERKVS.

D-ribulose 5-phosphate contacts are provided by residues 37–38, aspartate 42, 150–154, and glutamate 174; these read RE and RGGHT. Glutamate 38 is a Mg(2+) binding site. Mg(2+) is bound at residue histidine 153.

Belongs to the DHBP synthase family. Homodimer. Requires Mg(2+) as cofactor. The cofactor is Mn(2+).

The enzyme catalyses D-ribulose 5-phosphate = (2S)-2-hydroxy-3-oxobutyl phosphate + formate + H(+). It functions in the pathway cofactor biosynthesis; riboflavin biosynthesis; 2-hydroxy-3-oxobutyl phosphate from D-ribulose 5-phosphate: step 1/1. In terms of biological role, catalyzes the conversion of D-ribulose 5-phosphate to formate and 3,4-dihydroxy-2-butanone 4-phosphate. The chain is 3,4-dihydroxy-2-butanone 4-phosphate synthase from Salmonella arizonae (strain ATCC BAA-731 / CDC346-86 / RSK2980).